Reading from the N-terminus, the 543-residue chain is Sodium-dependent lysophosphatidylcholine symporter 1 (543 aa).

Residues methionine 1–glycine 14 show a composition bias toward low complexity. The tract at residues methionine 1–proline 34 is disordered. Over methionine 1 to glutamine 40 the chain is Cytoplasmic. A helical transmembrane segment spans residues leucine 41–tyrosine 70. The Extracellular portion of the chain corresponds to leucine 71–serine 94. A helical membrane pass occupies residues alanine 95–leucine 115. Over cysteine 116–arginine 127 the chain is Cytoplasmic. Residues leucine 128–tryptophan 147 traverse the membrane as a helical segment. Topologically, residues phenylalanine 148 to threonine 157 are extracellular. Residues tyrosine 158–threonine 182 traverse the membrane as a helical segment. The Cytoplasmic segment spans residues methionine 183–glutamine 189. Residues threonine 190–alanine 221 traverse the membrane as a helical segment. Residues aspartate 222–histidine 241 lie on the Extracellular side of the membrane. A disulfide bridge connects residues cysteine 225 and cysteine 473. 2 N-linked (GlcNAc...) asparagine glycosylation sites follow: asparagine 230 and asparagine 240. Residues threonine 242–leucine 275 form a helical membrane-spanning segment. Over glycine 276 to proline 306 the chain is Cytoplasmic. Residues tyrosine 307 to threonine 333 form a helical membrane-spanning segment. Over tyrosine 334–asparagine 344 the chain is Extracellular. The helical transmembrane segment at leucine 345–phenylalanine 363 threads the bilayer. At leucine 364–phenylalanine 367 the chain is on the cytoplasmic side. A helical membrane pass occupies residues glycine 368–leucine 389. The Extracellular segment spans residues methionine 390–serine 392. The chain crosses the membrane as a helical span at residues asparagine 393–lysine 429. The Cytoplasmic segment spans residues glutamine 430–isoleucine 439. Residues phenylalanine 440 to alanine 466 form a helical membrane-spanning segment. At glycine 467–arginine 478 the chain is on the extracellular side. A helical membrane pass occupies residues valine 479–phenylalanine 502. Residues lysine 503 to leucine 543 lie on the Cytoplasmic side of the membrane.

Belongs to the major facilitator superfamily. Interacts with ERVFRD-1/syncytin-2. In placenta, associated with trophoblast cells.

The protein resides in the cell membrane. It is found in the endoplasmic reticulum membrane. It carries out the reaction a 1-acyl-sn-glycero-3-phosphocholine(in) + Na(+)(in) = a 1-acyl-sn-glycero-3-phosphocholine(out) + Na(+)(out). The enzyme catalyses 1-(4Z,7Z,10Z,13Z,16Z,19Z-docosahexaenoyl)-sn-glycero-3-phosphocholine(in) + Na(+)(in) = 1-(4Z,7Z,10Z,13Z,16Z,19Z-docosahexaenoyl)-sn-glycero-3-phosphocholine(out) + Na(+)(out). The catalysed reaction is 1-(9Z-octadecenoyl)-sn-glycero-3-phosphocholine(in) + Na(+)(in) = 1-(9Z-octadecenoyl)-sn-glycero-3-phosphocholine(out) + Na(+)(out). It catalyses the reaction 1-hexadecanoyl-sn-glycero-3-phosphocholine(in) + Na(+)(in) = 1-hexadecanoyl-sn-glycero-3-phosphocholine(out) + Na(+)(out). It carries out the reaction a 1-acyl-sn-glycero-3-phosphoethanolamine(in) + Na(+)(in) = a 1-acyl-sn-glycero-3-phosphoethanolamine(out) + Na(+)(out). In terms of biological role, sodium-dependent lysophosphatidylcholine (LPC) symporter, which plays an essential role for blood-brain barrier formation and function. Specifically expressed in endothelium of the blood-brain barrier of micro-vessels and transports LPC into the brain. Transport of LPC is essential because it constitutes the major mechanism by which docosahexaenoic acid (DHA), an omega-3 fatty acid that is essential for normal brain growth and cognitive function, enters the brain. Transports LPC carrying long-chain fatty acids such LPC oleate and LPC palmitate with a minimum acyl chain length of 14 carbons. Does not transport docosahexaenoic acid in unesterified fatty acid. Specifically required for blood-brain barrier formation and function, probably by mediating lipid transport. Not required for central nervous system vascular morphogenesis. Acts as a transporter for tunicamycin, an inhibitor of asparagine-linked glycosylation. In placenta, acts as a receptor for ERVFRD-1/syncytin-2 and is required for trophoblast fusion. The sequence is that of Sodium-dependent lysophosphatidylcholine symporter 1 from Homo sapiens (Human).